The sequence spans 920 residues: Probable helicase HelY (920 aa).

The Helicase ATP-binding domain occupies 26-184; it reads CAALERGHGV…WVQTVRGDTT (159 aa). Residue 39-46 participates in ATP binding; the sequence is APTGAGKT. Residues 132 to 135 carry the DEVH box motif; that stretch reads DEVH. Positions 265-469 constitute a Helicase C-terminal domain; sequence EVIAILDAEG…SYNMTINLVH (205 aa).

The protein belongs to the helicase family. SKI2 subfamily.

This chain is Probable helicase HelY (helY), found in Mycobacterium leprae (strain TN).